The sequence spans 231 residues: uncharacterized protein (231 aa).

Residue 10–34 participates in NADP(+) binding; the sequence is VVTGAGSGIGEAIATLLHEEGAKVV. S140 lines the substrate pocket. Y153 (proton acceptor) is an active-site residue.

This sequence belongs to the short-chain dehydrogenases/reductases (SDR) family.

This is an uncharacterized protein from Staphylococcus aureus (strain MRSA252).